The sequence spans 371 residues: Neuropeptide S receptor (371 aa).

Residues 1–52 (MPANFTEGSFDSNGTGQMLDSSPVACTETVTFTEVVEGKEWGSFYYSFKTEQ) lie on the Extracellular side of the membrane. Asparagine 4 and asparagine 13 each carry an N-linked (GlcNAc...) asparagine glycan. Residues 53–73 (LITLWVLFVFTIVGNSVVLFS) traverse the membrane as a helical segment. The Cytoplasmic segment spans residues 74–82 (TWRRKRKSR). The chain crosses the membrane as a helical span at residues 83–103 (MTFFVTQLAITDSFTGLVNIL). The Extracellular segment spans residues 104 to 123 (TDIIWRFTGDFMAPDLVCRV). A disulfide bridge connects residues cysteine 121 and cysteine 197. A helical membrane pass occupies residues 124 to 144 (VRYLQVVLLYASTYVLVSLSI). Residues 145–164 (DRYHAIVYPMKFLQGEKQAK) lie on the Cytoplasmic side of the membrane. A helical transmembrane segment spans residues 165–185 (VLIVIAWSLSFLFSIPTLIIF). At 186–212 (GKRTLSNGEVQCWALWPDDSYWTPYMT) the chain is on the extracellular side. The helical transmembrane segment at 213-233 (IVAFLVYFIPLTIISVMYGIV) threads the bilayer. The Cytoplasmic segment spans residues 234-275 (IRTIWIKSKTYETVISNCSDGKLCSSYNRGLISKAKIKAIKY). Residues 276–296 (SIVIILAFICCWSPYFLFDIL) form a helical membrane-spanning segment. Over 297-312 (DNFNLLPDTQERFYAS) the chain is Extracellular. Residues 313–333 (VIIQNLPALNSAINPLIYCVF) traverse the membrane as a helical segment. Over 334-371 (SSSISFPCGERRSQDSIMTFRERTERHEMQILSKPEFI) the chain is Cytoplasmic.

The protein belongs to the G-protein coupled receptor 1 family. Vasopressin/oxytocin receptor subfamily.

It is found in the cell membrane. Its function is as follows. G-protein coupled receptor for neuropeptide S (NPS). Promotes mobilization of intracellular Ca(2+) stores. Inhibits cell growth in response to NPS binding. Involved in pathogenesis of asthma and other IgE-mediated diseases. This chain is Neuropeptide S receptor (NPSR1), found in Macaca mulatta (Rhesus macaque).